A 153-amino-acid polypeptide reads, in one-letter code: Cytochrome c-type biogenesis protein CcmE (153 aa).

The Cytoplasmic portion of the chain corresponds to 1–8 (MTTRRGRR). A helical; Signal-anchor for type II membrane protein membrane pass occupies residues 9 to 29 (ALLIAGGVGLLALAAALVLNA). The Periplasmic segment spans residues 30 to 153 (LRSNLVFFFS…PSATLQTEAR (124 aa)). Heme is bound by residues His124 and Tyr128.

Belongs to the CcmE/CycJ family.

It localises to the cell inner membrane. Its function is as follows. Heme chaperone required for the biogenesis of c-type cytochromes. Transiently binds heme delivered by CcmC and transfers the heme to apo-cytochromes in a process facilitated by CcmF and CcmH. The polypeptide is Cytochrome c-type biogenesis protein CcmE (Bordetella parapertussis (strain 12822 / ATCC BAA-587 / NCTC 13253)).